The primary structure comprises 370 residues: Queuine tRNA-ribosyltransferase (370 aa).

Residue Asp93 is the Proton acceptor of the active site. Residues 93-97 (DSGGF), Asp147, Gln190, and Gly217 each bind substrate. Residues 248-254 (GVGTPDY) form an RNA binding region. Catalysis depends on Asp267, which acts as the Nucleophile. Residues 272-276 (TRVAR) form an RNA binding; important for wobble base 34 recognition region. Zn(2+)-binding residues include Cys305, Cys307, Cys310, and His336.

Belongs to the queuine tRNA-ribosyltransferase family. Homodimer. Within each dimer, one monomer is responsible for RNA recognition and catalysis, while the other monomer binds to the replacement base PreQ1. Requires Zn(2+) as cofactor.

It carries out the reaction 7-aminomethyl-7-carbaguanine + guanosine(34) in tRNA = 7-aminomethyl-7-carbaguanosine(34) in tRNA + guanine. Its pathway is tRNA modification; tRNA-queuosine biosynthesis. In terms of biological role, catalyzes the base-exchange of a guanine (G) residue with the queuine precursor 7-aminomethyl-7-deazaguanine (PreQ1) at position 34 (anticodon wobble position) in tRNAs with GU(N) anticodons (tRNA-Asp, -Asn, -His and -Tyr). Catalysis occurs through a double-displacement mechanism. The nucleophile active site attacks the C1' of nucleotide 34 to detach the guanine base from the RNA, forming a covalent enzyme-RNA intermediate. The proton acceptor active site deprotonates the incoming PreQ1, allowing a nucleophilic attack on the C1' of the ribose to form the product. After dissociation, two additional enzymatic reactions on the tRNA convert PreQ1 to queuine (Q), resulting in the hypermodified nucleoside queuosine (7-(((4,5-cis-dihydroxy-2-cyclopenten-1-yl)amino)methyl)-7-deazaguanosine). This is Queuine tRNA-ribosyltransferase from Natranaerobius thermophilus (strain ATCC BAA-1301 / DSM 18059 / JW/NM-WN-LF).